Here is a 248-residue protein sequence, read N- to C-terminus: Ubiquinone/menaquinone biosynthesis C-methyltransferase UbiE (248 aa).

The S-adenosyl-L-methionine site is built by S68 and D92.

It belongs to the class I-like SAM-binding methyltransferase superfamily. MenG/UbiE family.

It carries out the reaction a 2-demethylmenaquinol + S-adenosyl-L-methionine = a menaquinol + S-adenosyl-L-homocysteine + H(+). It catalyses the reaction a 2-methoxy-6-(all-trans-polyprenyl)benzene-1,4-diol + S-adenosyl-L-methionine = a 5-methoxy-2-methyl-3-(all-trans-polyprenyl)benzene-1,4-diol + S-adenosyl-L-homocysteine + H(+). Its pathway is quinol/quinone metabolism; menaquinone biosynthesis; menaquinol from 1,4-dihydroxy-2-naphthoate: step 2/2. The protein operates within cofactor biosynthesis; ubiquinone biosynthesis. Functionally, methyltransferase required for the conversion of demethylmenaquinol (DMKH2) to menaquinol (MKH2) and the conversion of 2-polyprenyl-6-methoxy-1,4-benzoquinol (DDMQH2) to 2-polyprenyl-3-methyl-6-methoxy-1,4-benzoquinol (DMQH2). This Rickettsia bellii (strain OSU 85-389) protein is Ubiquinone/menaquinone biosynthesis C-methyltransferase UbiE.